We begin with the raw amino-acid sequence, 546 residues long: MVNESLNQEESNDRPVPESEFQADTSYSTQPSVSIHPSVSGHPSVSIHPSVSGHPSVSIDPSVSVHPSSSAHPSTLAQPSGLTHPNELVKEDSVIKVSKRRWAVVLVFSCYSLCNAFQWIQYGSINNIFMNFYGVSAFAIDWLSMCYMLTYIPLLLPVAWMLEKFGLRTIAITGSALNCLGAWVKLGSLEPHLFPVTMVGQVICSVAQVFILGMPSRIASVWFGANEVSTACSMAVFGNQLGIAIGFLVPPVLVPNIKDQEKLAYHISIMFYIIGGVATLLFILVIIVFKEKPKYPPSRAQSLSYALATTDASYLSSIVRLFKNLNFVLLVITYGLNAGAFYALSTLLNRMVIMHFPGQEVNAGRIGLTIVIAGMFGAMISGIWLDKSKTYKETTLVVYIMTLVGMVVYTFTLNLNHLWIVFITADSLGFFMTGYLPLGFEFAVELTYPESEGVSSGLLNVSAQVFGIIFTISQGQIIDNYGSVPGNIFLCVFLALGSALTAFIKSDLRRQRANKDAPETKVQEEEEEEEESNTSKVPTVLSEAHL.

Residues 1–84 form a disordered region; that stretch reads MVNESLNQEE…TLAQPSGLTH (84 aa). The Cytoplasmic segment spans residues 1–93; that stretch reads MVNESLNQEE…HPNELVKEDS (93 aa). Positions 22–49 are enriched in polar residues; the sequence is QADTSYSTQPSVSIHPSVSGHPSVSIHP. Tandem repeats lie at residues 31 to 36, 37 to 42, 43 to 48, 49 to 54, 55 to 60, 61 to 66, and 67 to 72. Residues 31 to 84 are 9 X 6 AA tandem repeats of P-S-[VS]-S-[VIAG]-[HD]; it reads PSVSIHPSVSGHPSVSIHPSVSGHPSVSIDPSVSVHPSSSAHPSTLAQPSGLTH. Low complexity predominate over residues 54 to 74; that stretch reads HPSVSIDPSVSVHPSSSAHPS. An 8; approximate repeat occupies 73-78; the sequence is PSTLAQ. One copy of the 9; approximate repeat lies at 79–84; that stretch reads PSGLTH. A helical membrane pass occupies residues 94–118; the sequence is VIKVSKRRWAVVLVFSCYSLCNAFQ. Choline is bound by residues asparagine 115, alanine 116, and tryptophan 119. At 119–136 the chain is on the extracellular side; that stretch reads WIQYGSINNIFMNFYGVS. A helical membrane pass occupies residues 137–164; that stretch reads AFAIDWLSMCYMLTYIPLLLPVAWMLEK. At 165–166 the chain is on the cytoplasmic side; the sequence is FG. Residues 167–186 form a helical membrane-spanning segment; it reads LRTIAITGSALNCLGAWVKL. Residues 187–193 lie on the Extracellular side of the membrane; it reads GSLEPHL. A helical transmembrane segment spans residues 194–222; sequence FPVTMVGQVICSVAQVFILGMPSRIASVW. Leucine 212 is a choline binding site. Residues 223–227 are Cytoplasmic-facing; that stretch reads FGANE. The chain crosses the membrane as a helical span at residues 228–253; it reads VSTACSMAVFGNQLGIAIGFLVPPVL. Residues 254 to 258 lie on the Extracellular side of the membrane; it reads VPNIK. A helical membrane pass occupies residues 259–288; that stretch reads DQEKLAYHISIMFYIIGGVATLLFILVIIV. Residues 289 to 324 lie on the Cytoplasmic side of the membrane; the sequence is FKEKPKYPPSRAQSLSYALATTDASYLSSIVRLFKN. Residues 325 to 355 traverse the membrane as a helical segment; sequence LNFVLLVITYGLNAGAFYALSTLLNRMVIMH. Residue tyrosine 342 participates in choline binding. Residues 356-359 lie on the Extracellular side of the membrane; sequence FPGQ. Residues 360–388 traverse the membrane as a helical segment; the sequence is EVNAGRIGLTIVIAGMFGAMISGIWLDKS. Residues 389–390 are Cytoplasmic-facing; sequence KT. The helical transmembrane segment at 391 to 413 threads the bilayer; it reads YKETTLVVYIMTLVGMVVYTFTL. The Extracellular segment spans residues 414–416; it reads NLN. Residues 417–446 form a helical membrane-spanning segment; the sequence is HLWIVFITADSLGFFMTGYLPLGFEFAVEL. The Cytoplasmic portion of the chain corresponds to 447-454; the sequence is TYPESEGV. The chain crosses the membrane as a helical span at residues 455–480; sequence SSGLLNVSAQVFGIIFTISQGQIIDN. Position 464 (glutamine 464) interacts with choline. Over 481–482 the chain is Extracellular; that stretch reads YG. The helical transmembrane segment at 483–505 threads the bilayer; sequence SVPGNIFLCVFLALGSALTAFIK. The Cytoplasmic portion of the chain corresponds to 506–546; sequence SDLRRQRANKDAPETKVQEEEEEEEESNTSKVPTVLSEAHL. The segment covering 511 to 523 has biased composition (basic and acidic residues); that stretch reads QRANKDAPETKVQ. Residues 511–546 form a disordered region; sequence QRANKDAPETKVQEEEEEEEESNTSKVPTVLSEAHL. Serine 535 is subject to Phosphoserine.

Belongs to the major facilitator superfamily. Feline leukemia virus subgroup C receptor (TC 2.A.1.28.1) family. In terms of assembly, interacts with components of electron transfer chain complexes III, IV and V including CYC1, NDUFA4, COX4I1, ATP5PD and ATP5F1C; these interactions occur in the absence of heme and are disrupted upon heme binding. Interacts with ATP2A2; this interaction occurs in the absence of heme and promotes ATP2A2 proteasomal degradation; the complex is dissociated upon heme binding. Interacts with HMOX1; this interaction is potentiated in the presence of heme.

Its subcellular location is the cell membrane. The protein resides in the mitochondrion membrane. It localises to the endoplasmic reticulum membrane. It carries out the reaction choline(out) = choline(in). It catalyses the reaction ethanolamine(in) = ethanolamine(out). The catalysed reaction is heme b(in) = heme b(out). Functionally, choline uniporter that specifically mediates choline uptake at the blood-brain-barrier. Responsible for the majority of choline uptake across the blood-brain-barrier from the circulation into the brain. Choline, a nutrient critical for brain development, is a precursor of phosphatidylcholine, as well as betaine. Also mediates transport of ethanolamine. Choline and ethanolamine transport is not coupled with proton transport and is exclusively driven by the choline gradient across the plasma membrane. However, the presence of an inwardly directed proton gradient enhances choline uptake. Also acts as a heme b transporter. Required to regulate mitochondrial respiration processes, ATP synthesis and thermogenesis. At low heme levels, interacts with components of electron transfer chain (ETC) complexes and ATP2A2, leading to ubiquitin-mediated degradation of ATP2A2 and inhibition of thermogenesis. Upon heme binding, dissociates from ETC complexes to allow switching from mitochondrial ATP synthesis to thermogenesis. This is Choline/ethanolamine transporter FLVCR2 (Flvcr2) from Rattus norvegicus (Rat).